A 376-amino-acid polypeptide reads, in one-letter code: Queuine tRNA-ribosyltransferase (376 aa).

D89 serves as the catalytic Proton acceptor. Residues 89 to 93 (DSGGF), D143, Q194, and G221 contribute to the substrate site. The RNA binding stretch occupies residues 252-258 (GVGIPSN). D271 (nucleophile) is an active-site residue. Positions 276 to 280 (ARNGR) are RNA binding; important for wobble base 34 recognition. Zn(2+) contacts are provided by C309, C311, C314, and H340.

Belongs to the queuine tRNA-ribosyltransferase family. Homodimer. Within each dimer, one monomer is responsible for RNA recognition and catalysis, while the other monomer binds to the replacement base PreQ1. Zn(2+) serves as cofactor.

The catalysed reaction is 7-aminomethyl-7-carbaguanine + guanosine(34) in tRNA = 7-aminomethyl-7-carbaguanosine(34) in tRNA + guanine. The protein operates within tRNA modification; tRNA-queuosine biosynthesis. Functionally, catalyzes the base-exchange of a guanine (G) residue with the queuine precursor 7-aminomethyl-7-deazaguanine (PreQ1) at position 34 (anticodon wobble position) in tRNAs with GU(N) anticodons (tRNA-Asp, -Asn, -His and -Tyr). Catalysis occurs through a double-displacement mechanism. The nucleophile active site attacks the C1' of nucleotide 34 to detach the guanine base from the RNA, forming a covalent enzyme-RNA intermediate. The proton acceptor active site deprotonates the incoming PreQ1, allowing a nucleophilic attack on the C1' of the ribose to form the product. After dissociation, two additional enzymatic reactions on the tRNA convert PreQ1 to queuine (Q), resulting in the hypermodified nucleoside queuosine (7-(((4,5-cis-dihydroxy-2-cyclopenten-1-yl)amino)methyl)-7-deazaguanosine). The chain is Queuine tRNA-ribosyltransferase from Clostridium botulinum (strain Hall / ATCC 3502 / NCTC 13319 / Type A).